We begin with the raw amino-acid sequence, 364 residues long: Fructose-bisphosphate aldolase B (364 aa).

Ala-2 is modified (N-acetylalanine). Lys-13 is modified (N6-succinyllysine). At Ser-36 the chain carries Phosphoserine. At Thr-39 the chain carries Phosphothreonine. Beta-D-fructose 1,6-bisphosphate is bound at residue Arg-43. Ser-89 bears the Phosphoserine mark. The residue at position 119 (Thr-119) is a Phosphothreonine. Lys-121 bears the N6-succinyllysine mark. Position 132 is a phosphoserine (Ser-132). Glu-188 (proton acceptor) is an active-site residue. Lys-230 acts as the Schiff-base intermediate with dihydroxyacetone-P in catalysis. A phosphoserine mark is found at Ser-272, Ser-276, Ser-299, and Ser-301. 272 to 274 (SGG) is a beta-D-fructose 1,6-bisphosphate binding site. Arg-304 is a beta-D-fructose 1,6-bisphosphate binding site. Phosphoserine is present on Ser-309. Position 317 is an N6-succinyllysine (Lys-317).

Belongs to the class I fructose-bisphosphate aldolase family. As to quaternary structure, homotetramer. Interacts with BBS1, BBS2, BBS4 and BBS7. Forms a ternary complex with G6PD and TP53; this interaction is direct.

The protein resides in the cytoplasm. It is found in the cytosol. It localises to the cytoskeleton. Its subcellular location is the microtubule organizing center. The protein localises to the centrosome. The protein resides in the centriolar satellite. It catalyses the reaction beta-D-fructose 1,6-bisphosphate = D-glyceraldehyde 3-phosphate + dihydroxyacetone phosphate. It carries out the reaction beta-D-fructose 1-phosphate = D-glyceraldehyde + dihydroxyacetone phosphate. It participates in carbohydrate degradation; glycolysis; D-glyceraldehyde 3-phosphate and glycerone phosphate from D-glucose: step 4/4. It functions in the pathway carbohydrate biosynthesis; gluconeogenesis. The protein operates within carbohydrate metabolism; fructose metabolism. Functionally, catalyzes the aldol cleavage of fructose 1,6-biphosphate to form two triosephosphates dihydroxyacetone phosphate and D-glyceraldehyde 3-phosphate in glycolysis as well as the reverse stereospecific aldol addition reaction in gluconeogenesis. In fructolysis, metabolizes fructose 1-phosphate derived from the phosphorylation of dietary fructose by fructokinase into dihydroxyacetone phosphate and D-glyceraldehyde. Acts as an adapter independently of its enzymatic activity, exerts a tumor suppressor role by stabilizing the ternary complex with G6PD and TP53 to inhibit G6PD activity and keep oxidative pentose phosphate metabolism in check. The protein is Fructose-bisphosphate aldolase B (ALDOB) of Pongo abelii (Sumatran orangutan).